We begin with the raw amino-acid sequence, 237 residues long: Leucyl/phenylalanyl-tRNA--protein transferase (237 aa).

This sequence belongs to the L/F-transferase family.

The protein localises to the cytoplasm. It carries out the reaction N-terminal L-lysyl-[protein] + L-leucyl-tRNA(Leu) = N-terminal L-leucyl-L-lysyl-[protein] + tRNA(Leu) + H(+). The enzyme catalyses N-terminal L-arginyl-[protein] + L-leucyl-tRNA(Leu) = N-terminal L-leucyl-L-arginyl-[protein] + tRNA(Leu) + H(+). It catalyses the reaction L-phenylalanyl-tRNA(Phe) + an N-terminal L-alpha-aminoacyl-[protein] = an N-terminal L-phenylalanyl-L-alpha-aminoacyl-[protein] + tRNA(Phe). Functionally, functions in the N-end rule pathway of protein degradation where it conjugates Leu, Phe and, less efficiently, Met from aminoacyl-tRNAs to the N-termini of proteins containing an N-terminal arginine or lysine. This is Leucyl/phenylalanyl-tRNA--protein transferase from Aromatoleum aromaticum (strain DSM 19018 / LMG 30748 / EbN1) (Azoarcus sp. (strain EbN1)).